The following is a 488-amino-acid chain: MINRQLSRLLLCSILGSTTLISGCALVRKDSAPHQQLKPEQIKLADDIHLASSGWPQAQWWKQLNDPQLDALIQRTLSGSHTLAEAKLREEKAQSQADLLDAGSQLQVAALGMLNRQRVSANGFLSPYAMDAPALGMDGPYYTEATVGLFAGLDLDLWGVHRSAVAAAIGAHNAALAETAAVELSLTTGVAQLYYSMQASYQMLDLLEQTRDVIDYAVKAHQSKVAHGLEAQVPFHGARAQILAVDKQIAAVKGQITETRESLRALIGAGASDMPEIKPVALPRVQTGIPATLSYELLARRPDLQAMRWYVQASLDQVDSARALFYPSFDIKAFFGLDAIHLDTLFKKTSRQFNFIPGLKLPLFDGGRLNANLEGTRAASNMMIERYNQSVLNAVRDVAVNGTRLQTLNDEREMQAEHVEATRFTQRAAEAAYQRGLTSRLQATEARLPVLAEEMSLLMLDSRRVIQSIQLMKSLGGGYQAAPVVEKK.

Residues 1-23 form the signal peptide; that stretch reads MINRQLSRLLLCSILGSTTLISG. Cysteine 24 carries N-palmitoyl cysteine lipidation. A lipid anchor (S-diacylglycerol cysteine) is attached at cysteine 24.

It belongs to the outer membrane factor (OMF) (TC 1.B.17) family. In terms of assembly, could be part of a tripartite efflux system composed of MdtN, MdtO and MdtP.

It localises to the cell outer membrane. Could be involved in resistance to puromycin, acriflavine and tetraphenylarsonium chloride. In Shigella flexneri, this protein is Multidrug resistance outer membrane protein MdtP (mdtP).